A 499-amino-acid chain; its full sequence is Glucose-6-phosphate exchanger SLC37A2 (499 aa).

The helical transmembrane segment at 21–40 threads the bilayer; sequence YRGFIIVMTFLFYTCYHMSR. Asparagine 53, asparagine 62, and asparagine 66 each carry an N-linked (GlcNAc...) asparagine glycan. 11 consecutive transmembrane segments (helical) span residues 86–106, 116–136, 138–158, 187–207, 208–228, 302–322, 334–354, 362–382, 391–411, 434–454, and 458–478; these read GSLDTAFLVSYAIGMFFSGIF, LSGGMIICGIFTSFMGLGYYW, IHALWYYILFQILNGLAQTTG, AVGNILGSLIAGAFVSTAWGL, SFIVPGIIIAAFGIFCFFFLV, LCLLFAKLVSYTFLYWLPLYI, GDLSTLFDVGGIIGGILAGGI, AITCTIMLILTAPMLFIYNYL, VAMLIVCGILVNGPYSLITTA, AIIDGSGSIGAALGPSLAGVL, and GWNYVFYMLIAADICACLLLV.

Belongs to the major facilitator superfamily. Organophosphate:Pi antiporter (OPA) (TC 2.A.1.4) family.

The protein resides in the endoplasmic reticulum membrane. The catalysed reaction is D-glucose 6-phosphate(in) + phosphate(out) = D-glucose 6-phosphate(out) + phosphate(in). In terms of biological role, inorganic phosphate and glucose-6-phosphate antiporter. May transport cytoplasmic glucose-6-phosphate into the lumen of the endoplasmic reticulum and translocate inorganic phosphate into the opposite direction. In Xenopus tropicalis (Western clawed frog), this protein is Glucose-6-phosphate exchanger SLC37A2.